A 396-amino-acid chain; its full sequence is Probable splicing factor YJU2B (396 aa).

The tract at residues 1-26 is disordered; the sequence is MGERKGVNKYYPPDFNPEKHGSLNRY. The residue at position 40 (Ser-40) is a Phosphoserine. A coiled-coil region spans residues 182 to 214; sequence LNSMLRRRFREKKKAIQEEEERDQALQAKASLT. A disordered region spans residues 295–396; the sequence is IVRRRSRDVP…VADYSDSESE (102 aa). Ser-306 is modified (phosphoserine). Basic and acidic residues predominate over residues 315–327; the sequence is KSGEPRVPEEAAQ. Over residues 340-350 the composition is skewed to polar residues; sequence TTETPKCSSPR. The residue at position 362 (Ser-362) is a Phosphoserine.

It belongs to the CWC16 family.

Its subcellular location is the nucleus. Functionally, may be involved in mRNA splicing. The protein is Probable splicing factor YJU2B of Homo sapiens (Human).